The sequence spans 694 residues: MLFRLWVFVLLTPCYSWRPWTISDESHCKNGNSENPIVRPGFITFNFYTKNDTRIYQVPKCLLGSDITYHLFDAINTTESLTNYEKRVTRFYEPPMNDILRLSTVPAVKQFNLDHSIQPQIVYSLNLYPSHGIYYIRVVEVRQMQYDNVSCKLPNSLNELIFPVQVRCAKITRYAGENIYTHFFTPDFMILYIQNPAGDLTMMYGNTTDINFKAPYRKSSFIFKQTLTDDLLLIVEKDVVDEEYRFISDATFVDETLDDVDEVEALLLKFNNLGIQTLLRGDCKKPDYAGIPQMMFLYGIVHFSYSTKNTGPMPVLRVLKTHENLLSIDSFVNRCVNVSEGTIQYPKMKEFLKYEPSDYSYITKNKSIPVSTLLTYLATAYETNVTISRYKWSDIANTLQKIYEKHMFFTNLTFSDRETLFMLAEIANFIPADERMQRHMQLLIGNLCNPVEIVSWAHMLTADKAPNLENIYSPCASPVRRDVTNSFVKTVLTYASLDRYRSDMMEMLSVYRPPDMARVAAIQCLSPSEPAASLPLPNVTFVISPSYVIKGVSLTITTTIVATSIIITAIPLNSTCVSTNYKYAGQDLLVLRNISSQTCEFCQSVVMEYDDIDGPLQYIYIKNIDELKTLTDPNNNLLVPNTRTHYLLLAKNGSVFEMSEVGIDIDQVSIILVIIYVLIAIIALFGLYRLIRLC.

The first 16 residues, 1–16 (MLFRLWVFVLLTPCYS), serve as a signal peptide directing secretion. Over 17–671 (WRPWTISDES…GIDIDQVSII (655 aa)) the chain is Virion surface. Asparagine 51, asparagine 76, asparagine 148, asparagine 206, asparagine 337, asparagine 365, asparagine 384, asparagine 411, asparagine 538, asparagine 573, asparagine 593, and asparagine 652 each carry an N-linked (GlcNAc...) asparagine; by host glycan. An interaction with gL region spans residues 174-234 (YAGENIYTHF…QTLTDDLLLI (61 aa)). The helical transmembrane segment at 672–692 (LVIIYVLIAIIALFGLYRLIR) threads the bilayer. Over 693–694 (LC) the chain is Intravirion.

It belongs to the herpesviridae glycoprotein H family. Interacts with glycoprotein L (gL); this interaction is necessary for the correct processing and cell surface expression of gH. The heterodimer gH/gL seems to interact with gB trimers during fusion. Post-translationally, N-glycosylated, O-glycosylated, and sialylated.

Its subcellular location is the virion membrane. The protein localises to the host cell membrane. The protein resides in the host endosome membrane. Functionally, the heterodimer glycoprotein H-glycoprotein L is required for the fusion of viral and plasma membranes leading to virus entry into the host cell. Following initial binding to host receptor, membrane fusion is mediated by the fusion machinery composed of gB and the heterodimer gH/gL. May also be involved in the fusion between the virion envelope and the outer nuclear membrane during virion morphogenesis. In Human herpesvirus 6B (strain Z29) (HHV-6 variant B), this protein is Envelope glycoprotein H.